Consider the following 318-residue polypeptide: Carnitine monooxygenase reductase subunit (318 aa).

One can recognise an FAD-binding FR-type domain in the interval 5–107; sequence YEMFPAVVTR…SEPKNLFPLA (103 aa). The region spanning 233-318 is the 2Fe-2S ferredoxin-type domain; that stretch reads FTVVLAKSNQ…AKGKKLVLDL (86 aa). Residues cysteine 267, cysteine 272, cysteine 275, and cysteine 305 each coordinate [2Fe-2S] cluster.

Belongs to the PDR/VanB family. CntB subfamily. In terms of assembly, composed of an oxygenase subunit (cntA) and a reductase subunit (cntB). FMN serves as cofactor. Requires [2Fe-2S] cluster as cofactor.

The catalysed reaction is (R)-carnitine + NADH + O2 + H(+) = (3R)-3-hydroxy-4-oxobutanoate + trimethylamine + NAD(+) + H2O. It carries out the reaction (R)-carnitine + NADPH + O2 + H(+) = (3R)-3-hydroxy-4-oxobutanoate + trimethylamine + NADP(+) + H2O. It participates in amine and polyamine metabolism; carnitine metabolism. In terms of biological role, converts carnitine to trimethylamine and malic semialdehyde. This Acinetobacter baumannii (strain ATCC 19606 / DSM 30007 / JCM 6841 / CCUG 19606 / CIP 70.34 / NBRC 109757 / NCIMB 12457 / NCTC 12156 / 81) protein is Carnitine monooxygenase reductase subunit.